A 334-amino-acid polypeptide reads, in one-letter code: Glycosylinositol phosphorylceramide mannosyl transferase 1 (334 aa).

Over 1–26 (MGGGEVSKEMGACSLAYRRGDQKLRK) the chain is Cytoplasmic. A helical; Signal-anchor for type II membrane protein membrane pass occupies residues 27–49 (FVTARSTKFLLFCCIAFVLVTIV). Residues 50–334 (CRSSRPWVNS…AVDSRNLWFW (285 aa)) lie on the Lumenal side of the membrane. Residue Asn-58 is glycosylated (N-linked (GlcNAc...) asparagine). Residues 145 to 150 (DSLNNR), 166 to 168 (DDD), Arg-196, and 258 to 262 (RNCED) contribute to the substrate site. Asp-168 lines the Mn(2+) pocket. An intrachain disulfide couples Cys-260 to Cys-305. The active site involves Asp-262. N-linked (GlcNAc...) asparagine glycosylation is present at Asn-271. Substrate contacts are provided by residues 289 to 302 (STGI…TEKR) and 292 to 302 (ISSIGGHTEKR).

Belongs to the glycosyltransferase 64 family. Mn(2+) is required as a cofactor. In terms of tissue distribution, expressed in leaves, roots, stem, and flowers.

It is found in the golgi apparatus membrane. It participates in protein modification; protein glycosylation. The protein operates within sphingolipid metabolism. In terms of biological role, mannosyl transferase (ManT) required for the biosynthesis of mannose-carrying glycosylinositol phosphorylceramides (GIPCs). Maybe involved in cell-cell adhesion that maintains the integrity of organs by providing mechanical strength and facilitating the movement of metabolites throughout the plant during development. Prevents abscisic acid- (ABA-) mediated effects on development (e.g. cell size, flowering time, senescence). Probably implicated in beta-(1,4)-galactan biosynthesis thus being a cell-wall synthesis-related (CWSR) protein. In Arabidopsis thaliana (Mouse-ear cress), this protein is Glycosylinositol phosphorylceramide mannosyl transferase 1.